A 557-amino-acid chain; its full sequence is Formate--tetrahydrofolate ligase (557 aa).

Residue 65-72 coordinates ATP; sequence SPAGEGKT.

The protein belongs to the formate--tetrahydrofolate ligase family.

The enzyme catalyses (6S)-5,6,7,8-tetrahydrofolate + formate + ATP = (6R)-10-formyltetrahydrofolate + ADP + phosphate. It participates in one-carbon metabolism; tetrahydrofolate interconversion. This Methylobacillus flagellatus (strain ATCC 51484 / DSM 6875 / VKM B-1610 / KT) protein is Formate--tetrahydrofolate ligase.